The sequence spans 160 residues: Transcriptional regulator MraZ (160 aa).

SpoVT-AbrB domains follow at residues 5-50 (NFET…DGGY) and 93-136 (AVEC…SQAE).

This sequence belongs to the MraZ family. As to quaternary structure, forms oligomers.

It localises to the cytoplasm. The protein localises to the nucleoid. In Geotalea daltonii (strain DSM 22248 / JCM 15807 / FRC-32) (Geobacter daltonii), this protein is Transcriptional regulator MraZ.